The sequence spans 373 residues: Dual-specificity RNA methyltransferase RlmN (373 aa).

E94 serves as the catalytic Proton acceptor. The Radical SAM core domain occupies 100-339 (EDDRATLCVS…VIVRKTRGDD (240 aa)). Cysteines 107 and 344 form a disulfide. C114, C118, and C121 together coordinate [4Fe-4S] cluster. S-adenosyl-L-methionine contacts are provided by residues 168-169 (GE), S200, 222-224 (SIH), and N301. The active-site S-methylcysteine intermediate is C344.

Belongs to the radical SAM superfamily. RlmN family. The cofactor is [4Fe-4S] cluster.

It is found in the cytoplasm. The catalysed reaction is adenosine(2503) in 23S rRNA + 2 reduced [2Fe-2S]-[ferredoxin] + 2 S-adenosyl-L-methionine = 2-methyladenosine(2503) in 23S rRNA + 5'-deoxyadenosine + L-methionine + 2 oxidized [2Fe-2S]-[ferredoxin] + S-adenosyl-L-homocysteine. The enzyme catalyses adenosine(37) in tRNA + 2 reduced [2Fe-2S]-[ferredoxin] + 2 S-adenosyl-L-methionine = 2-methyladenosine(37) in tRNA + 5'-deoxyadenosine + L-methionine + 2 oxidized [2Fe-2S]-[ferredoxin] + S-adenosyl-L-homocysteine. In terms of biological role, specifically methylates position 2 of adenine 2503 in 23S rRNA and position 2 of adenine 37 in tRNAs. m2A2503 modification seems to play a crucial role in the proofreading step occurring at the peptidyl transferase center and thus would serve to optimize ribosomal fidelity. The polypeptide is Dual-specificity RNA methyltransferase RlmN (Shewanella baltica (strain OS185)).